Reading from the N-terminus, the 84-residue chain is ATP synthase subunit c (84 aa).

2 helical membrane-spanning segments follow: residues 10–30 and 53–73; these read IAVA…FAIL and FIVA…ALFF.

The protein belongs to the ATPase C chain family. F-type ATPases have 2 components, F(1) - the catalytic core - and F(0) - the membrane proton channel. F(1) has five subunits: alpha(3), beta(3), gamma(1), delta(1), epsilon(1). F(0) has three main subunits: a(1), b(2) and c(10-14). The alpha and beta chains form an alternating ring which encloses part of the gamma chain. F(1) is attached to F(0) by a central stalk formed by the gamma and epsilon chains, while a peripheral stalk is formed by the delta and b chains.

It is found in the cell inner membrane. In terms of biological role, f(1)F(0) ATP synthase produces ATP from ADP in the presence of a proton or sodium gradient. F-type ATPases consist of two structural domains, F(1) containing the extramembraneous catalytic core and F(0) containing the membrane proton channel, linked together by a central stalk and a peripheral stalk. During catalysis, ATP synthesis in the catalytic domain of F(1) is coupled via a rotary mechanism of the central stalk subunits to proton translocation. Functionally, key component of the F(0) channel; it plays a direct role in translocation across the membrane. A homomeric c-ring of between 10-14 subunits forms the central stalk rotor element with the F(1) delta and epsilon subunits. The chain is ATP synthase subunit c from Shewanella putrefaciens (strain CN-32 / ATCC BAA-453).